The chain runs to 506 residues: MKEYQVYLERARSRQQDFLYPLIFREYIYGLAYSHNWNRSIFVENGGYDDKYSLLNVKRLITRMYQQNHLIISTNDSNKNPFWGYNKNFYSQTISEGFAIVVEIPFFLQLSSSLEEAEIIKSYKNVRSIHSIFPFLEDKFTYLNYVSDIRIPYPIHLEILVQILRYWVKDAPFFHLLRLFLYHFSNWNRFITTKKSISTFSKSNPRLFLFLYNFYVCEYESIFLFLRNKSSHLRLKSFSVFLERIFFYAKREHLVEVFAKDFSYPLPFFKDPNIHYVRYQGKCILASKNVPFLMNKWKHYFIHLWQCFFDVWSQPRTININQLSEHSFQLLGYFSNVRLNRSVVRSQMLQNTFLIEIVSKKLDIIVPIIPLIRSLAKAKFCNVLGHPISKPVWADSSDFDIIERFLRICRNLSHYYNGSSKKKSLYRIKYILRLSCIKTLACKHKSTVRAFLKRSGSEELLEEFFTEEEEILSLIFPRDSFTLHRFYRNRIWYLDILFSNDLVNDE.

The protein belongs to the intron maturase 2 family. MatK subfamily.

It localises to the plastid. The protein resides in the chloroplast. Its function is as follows. Usually encoded in the trnK tRNA gene intron. Probably assists in splicing its own and other chloroplast group II introns. The polypeptide is Maturase K (Trifolium hirtum (Rose clover)).